A 332-amino-acid chain; its full sequence is Glycerol-3-phosphate dehydrogenase [NAD(P)+] (332 aa).

The NADPH site is built by Ser10, Trp11, His31, Arg32, and Lys105. Sn-glycerol 3-phosphate is bound by residues Lys105, Gly136, and Ser138. An NADPH-binding site is contributed by Ala140. Sn-glycerol 3-phosphate-binding residues include Lys191, Asp244, Ser254, Arg255, and Asn256. Residue Lys191 is the Proton acceptor of the active site. Arg255 is an NADPH binding site. 2 residues coordinate NADPH: Val279 and Glu281.

Belongs to the NAD-dependent glycerol-3-phosphate dehydrogenase family.

Its subcellular location is the cytoplasm. The catalysed reaction is sn-glycerol 3-phosphate + NAD(+) = dihydroxyacetone phosphate + NADH + H(+). It carries out the reaction sn-glycerol 3-phosphate + NADP(+) = dihydroxyacetone phosphate + NADPH + H(+). The protein operates within membrane lipid metabolism; glycerophospholipid metabolism. In terms of biological role, catalyzes the reduction of the glycolytic intermediate dihydroxyacetone phosphate (DHAP) to sn-glycerol 3-phosphate (G3P), the key precursor for phospholipid synthesis. The sequence is that of Glycerol-3-phosphate dehydrogenase [NAD(P)+] from Prosthecochloris aestuarii (strain DSM 271 / SK 413).